A 98-amino-acid chain; its full sequence is Aspartyl/glutamyl-tRNA(Asn/Gln) amidotransferase subunit C (98 aa).

It belongs to the GatC family. In terms of assembly, heterotrimer of A, B and C subunits.

It catalyses the reaction L-glutamyl-tRNA(Gln) + L-glutamine + ATP + H2O = L-glutaminyl-tRNA(Gln) + L-glutamate + ADP + phosphate + H(+). The catalysed reaction is L-aspartyl-tRNA(Asn) + L-glutamine + ATP + H2O = L-asparaginyl-tRNA(Asn) + L-glutamate + ADP + phosphate + 2 H(+). In terms of biological role, allows the formation of correctly charged Asn-tRNA(Asn) or Gln-tRNA(Gln) through the transamidation of misacylated Asp-tRNA(Asn) or Glu-tRNA(Gln) in organisms which lack either or both of asparaginyl-tRNA or glutaminyl-tRNA synthetases. The reaction takes place in the presence of glutamine and ATP through an activated phospho-Asp-tRNA(Asn) or phospho-Glu-tRNA(Gln). The chain is Aspartyl/glutamyl-tRNA(Asn/Gln) amidotransferase subunit C from Micrococcus luteus (strain ATCC 4698 / DSM 20030 / JCM 1464 / CCM 169 / CCUG 5858 / IAM 1056 / NBRC 3333 / NCIMB 9278 / NCTC 2665 / VKM Ac-2230) (Micrococcus lysodeikticus).